The primary structure comprises 322 residues: DNA primase small subunit PriS (322 aa).

Residues Asp100, Asp102, and Asp228 contribute to the active site.

This sequence belongs to the eukaryotic-type primase small subunit family. Heterodimer of a small subunit (PriS) and a large subunit (PriL). The cofactor is Mg(2+). It depends on Mn(2+) as a cofactor.

Catalytic subunit of DNA primase, an RNA polymerase that catalyzes the synthesis of short RNA molecules used as primers for DNA polymerase during DNA replication. The small subunit contains the primase catalytic core and has DNA synthesis activity on its own. Binding to the large subunit stabilizes and modulates the activity, increasing the rate of DNA synthesis while decreasing the length of the DNA fragments, and conferring RNA synthesis capability. The DNA polymerase activity may enable DNA primase to also catalyze primer extension after primer synthesis. May also play a role in DNA repair. This chain is DNA primase small subunit PriS, found in Sulfolobus acidocaldarius (strain ATCC 33909 / DSM 639 / JCM 8929 / NBRC 15157 / NCIMB 11770).